The following is a 261-amino-acid chain: Mannose-specific lectin 2 (261 aa).

An N-terminal signal peptide occupies residues 1-23 (MAKLLLFLLPAILGLLIPRSAVA). 2 consecutive Bulb-type lectin domains span residues 26 to 131 (TNYL…PWVP) and 145 to 252 (DNLL…SKRS). Residues 51–55 (QNDCN), Tyr59, Trp63, Gln64, 170–174 (QGDCN), Tyr178, and 182–185 (YGWQ) each bind beta-D-mannose. Positions 51–59 (QNDCNLVLY) match the Carbohydrate-binding motif 1 motif. 2 disulfides stabilise this stretch: Cys54–Cys74 and Cys173–Cys195. A Carbohydrate-binding motif 2 motif is present at residues 170-178 (QGDCNLVLY).

In terms of assembly, forms heterotetramer of 2 chains 1 and 2 chains 2 arranged as a dimer of chain 1 and chain 2 heterodimers.

Its function is as follows. Mannose-specific lectin. Shows agglutinating activity towards erythrocytes from rabbit. This chain is Mannose-specific lectin 2, found in Colocasia esculenta (Wild taro).